We begin with the raw amino-acid sequence, 395 residues long: Univin (395 aa).

The signal sequence occupies residues 1–19 (MDVSKVLILTLIWLLTADS). Positions 20 to 272 (APPDYVTLTR…CSKRNRRNKR (253 aa)) are excised as a propeptide. N50 is a glycosylation site (N-linked (GlcNAc...) asparagine). The tract at residues 69–97 (EGAAASRGGETEIGKEEEEDGRPCSETKL) is disordered. N-linked (GlcNAc...) asparagine glycans are attached at residues N116 and N336. 3 disulfide bridges follow: C294–C360, C323–C392, and C327–C394.

It belongs to the TGF-beta family. As to quaternary structure, homodimer; disulfide-linked.

Its subcellular location is the secreted. Its function is as follows. Could have a critical role in early developmental decisions in the sea urchin embryo. This is Univin from Strongylocentrotus purpuratus (Purple sea urchin).